A 236-amino-acid polypeptide reads, in one-letter code: Uridylate kinase (236 aa).

10-13 (KLSG) is an ATP binding site. Glycine 52 provides a ligand contact to UMP. ATP contacts are provided by glycine 53 and arginine 57. UMP contacts are provided by residues aspartate 72 and 133–140 (TGNPFFTT). Residues threonine 160, tyrosine 166, and aspartate 169 each contribute to the ATP site.

The protein belongs to the UMP kinase family. As to quaternary structure, homohexamer.

The protein localises to the cytoplasm. It catalyses the reaction UMP + ATP = UDP + ADP. It participates in pyrimidine metabolism; CTP biosynthesis via de novo pathway; UDP from UMP (UMPK route): step 1/1. Its activity is regulated as follows. Inhibited by UTP. In terms of biological role, catalyzes the reversible phosphorylation of UMP to UDP. This is Uridylate kinase from Cupriavidus pinatubonensis (strain JMP 134 / LMG 1197) (Cupriavidus necator (strain JMP 134)).